Here is a 101-residue protein sequence, read N- to C-terminus: TrfB transcriptional repressor protein (101 aa).

The segment at residues 37–56 (QATFATSLGLTRGAVSQAVH) is a DNA-binding region (H-T-H motif).

In conjunction with KorB, inhibits the transcription of kilA, trfA and korAB operons. In conjunction with KorC is responsible for the negative control of kilC and kilE operons. This Escherichia coli protein is TrfB transcriptional repressor protein (trfB).